A 345-amino-acid polypeptide reads, in one-letter code: Ferrochelatase (345 aa).

Fe cation is bound by residues His-215 and Glu-296.

The protein belongs to the ferrochelatase family.

It localises to the cytoplasm. The catalysed reaction is heme b + 2 H(+) = protoporphyrin IX + Fe(2+). It participates in porphyrin-containing compound metabolism; protoheme biosynthesis; protoheme from protoporphyrin-IX: step 1/1. In terms of biological role, catalyzes the ferrous insertion into protoporphyrin IX. Essential for normal nodule development. The polypeptide is Ferrochelatase (Bradyrhizobium diazoefficiens (strain JCM 10833 / BCRC 13528 / IAM 13628 / NBRC 14792 / USDA 110)).